The primary structure comprises 130 residues: Protein ApaG (130 aa).

The ApaG domain occupies Lys3 to Arg127.

The chain is Protein ApaG from Methylorubrum populi (strain ATCC BAA-705 / NCIMB 13946 / BJ001) (Methylobacterium populi).